We begin with the raw amino-acid sequence, 858 residues long: Bifunctional uridylyltransferase/uridylyl-removing enzyme (858 aa).

A uridylyltransferase region spans residues 1 to 324 (MSASVAEPPP…PATSGVTRVL (324 aa)). Residues 325-681 (SPGRFVEKQG…ARPSPVGDAL (357 aa)) form a uridylyl-removing region. An HD domain is found at 443–565 (VDQHILMVLR…VGSERRLTAL (123 aa)). ACT domains follow at residues 682 to 761 (QVLV…PEPS) and 790 to 858 (ILSV…AIAV).

It belongs to the GlnD family. Mg(2+) serves as cofactor.

The catalysed reaction is [protein-PII]-L-tyrosine + UTP = [protein-PII]-uridylyl-L-tyrosine + diphosphate. It carries out the reaction [protein-PII]-uridylyl-L-tyrosine + H2O = [protein-PII]-L-tyrosine + UMP + H(+). Its activity is regulated as follows. Uridylyltransferase (UTase) activity is inhibited by glutamine, while glutamine activates uridylyl-removing (UR) activity. In terms of biological role, modifies, by uridylylation and deuridylylation, the PII regulatory proteins (GlnB and homologs), in response to the nitrogen status of the cell that GlnD senses through the glutamine level. Under low glutamine levels, catalyzes the conversion of the PII proteins and UTP to PII-UMP and PPi, while under higher glutamine levels, GlnD hydrolyzes PII-UMP to PII and UMP (deuridylylation). Thus, controls uridylylation state and activity of the PII proteins, and plays an important role in the regulation of nitrogen assimilation and metabolism. The sequence is that of Bifunctional uridylyltransferase/uridylyl-removing enzyme from Burkholderia pseudomallei (strain K96243).